A 316-amino-acid polypeptide reads, in one-letter code: Ribosomal RNA small subunit methyltransferase H (316 aa).

S-adenosyl-L-methionine-binding positions include 35–37 (AGH), Asp-55, Phe-84, Asp-105, and Gln-112.

It belongs to the methyltransferase superfamily. RsmH family.

Its subcellular location is the cytoplasm. The enzyme catalyses cytidine(1402) in 16S rRNA + S-adenosyl-L-methionine = N(4)-methylcytidine(1402) in 16S rRNA + S-adenosyl-L-homocysteine + H(+). Functionally, specifically methylates the N4 position of cytidine in position 1402 (C1402) of 16S rRNA. In Streptococcus thermophilus (strain CNRZ 1066), this protein is Ribosomal RNA small subunit methyltransferase H.